Here is a 350-residue protein sequence, read N- to C-terminus: GTPase Obg (350 aa).

An Obg domain is found at 1–159 (MKFLDQAKIY…RWIWLRLKLI (159 aa)). The OBG-type G domain maps to 160–328 (ADVGLVGLPN…VLRLLQDRVT (169 aa)). GTP-binding positions include 166–173 (GLPNAGKS), 191–195 (FTTLH), 213–216 (DIPG), 280–283 (NKID), and 309–311 (SGV). S173 and T193 together coordinate Mg(2+). Positions 331 to 350 (REAARDAAPPQAAAGREETA) are disordered.

This sequence belongs to the TRAFAC class OBG-HflX-like GTPase superfamily. OBG GTPase family. As to quaternary structure, monomer. Mg(2+) is required as a cofactor.

Its subcellular location is the cytoplasm. Its function is as follows. An essential GTPase which binds GTP, GDP and possibly (p)ppGpp with moderate affinity, with high nucleotide exchange rates and a fairly low GTP hydrolysis rate. Plays a role in control of the cell cycle, stress response, ribosome biogenesis and in those bacteria that undergo differentiation, in morphogenesis control. The chain is GTPase Obg from Gluconacetobacter diazotrophicus (strain ATCC 49037 / DSM 5601 / CCUG 37298 / CIP 103539 / LMG 7603 / PAl5).